Reading from the N-terminus, the 689-residue chain is DNA ligase (689 aa).

NAD(+) contacts are provided by residues Asp-40–Asp-44, Ser-89–Leu-90, and Glu-121. Lys-123 acts as the N6-AMP-lysine intermediate in catalysis. The NAD(+) site is built by Arg-144, Glu-179, Lys-295, and Lys-319. Residues Cys-413, Cys-416, Cys-431, and Cys-437 each coordinate Zn(2+). Residues Lys-610 to Val-689 enclose the BRCT domain.

The protein belongs to the NAD-dependent DNA ligase family. LigA subfamily. It depends on Mg(2+) as a cofactor. Mn(2+) is required as a cofactor.

It catalyses the reaction NAD(+) + (deoxyribonucleotide)n-3'-hydroxyl + 5'-phospho-(deoxyribonucleotide)m = (deoxyribonucleotide)n+m + AMP + beta-nicotinamide D-nucleotide.. Its function is as follows. DNA ligase that catalyzes the formation of phosphodiester linkages between 5'-phosphoryl and 3'-hydroxyl groups in double-stranded DNA using NAD as a coenzyme and as the energy source for the reaction. It is essential for DNA replication and repair of damaged DNA. In Rickettsia canadensis (strain McKiel), this protein is DNA ligase.